The sequence spans 212 residues: Thiamine-phosphate synthase (212 aa).

4-amino-2-methyl-5-(diphosphooxymethyl)pyrimidine-binding positions include 35–39 (QLRDK) and N67. D68 and D87 together coordinate Mg(2+). S106 contributes to the 4-amino-2-methyl-5-(diphosphooxymethyl)pyrimidine binding site. 132–134 (TGS) is a binding site for 2-[(2R,5Z)-2-carboxy-4-methylthiazol-5(2H)-ylidene]ethyl phosphate. K135 is a 4-amino-2-methyl-5-(diphosphooxymethyl)pyrimidine binding site. 2-[(2R,5Z)-2-carboxy-4-methylthiazol-5(2H)-ylidene]ethyl phosphate is bound by residues G163 and 183–184 (IS).

This sequence belongs to the thiamine-phosphate synthase family. Requires Mg(2+) as cofactor.

The catalysed reaction is 2-[(2R,5Z)-2-carboxy-4-methylthiazol-5(2H)-ylidene]ethyl phosphate + 4-amino-2-methyl-5-(diphosphooxymethyl)pyrimidine + 2 H(+) = thiamine phosphate + CO2 + diphosphate. It carries out the reaction 2-(2-carboxy-4-methylthiazol-5-yl)ethyl phosphate + 4-amino-2-methyl-5-(diphosphooxymethyl)pyrimidine + 2 H(+) = thiamine phosphate + CO2 + diphosphate. It catalyses the reaction 4-methyl-5-(2-phosphooxyethyl)-thiazole + 4-amino-2-methyl-5-(diphosphooxymethyl)pyrimidine + H(+) = thiamine phosphate + diphosphate. Its pathway is cofactor biosynthesis; thiamine diphosphate biosynthesis; thiamine phosphate from 4-amino-2-methyl-5-diphosphomethylpyrimidine and 4-methyl-5-(2-phosphoethyl)-thiazole: step 1/1. Functionally, condenses 4-methyl-5-(beta-hydroxyethyl)thiazole monophosphate (THZ-P) and 2-methyl-4-amino-5-hydroxymethyl pyrimidine pyrophosphate (HMP-PP) to form thiamine monophosphate (TMP). This chain is Thiamine-phosphate synthase, found in Methanocella arvoryzae (strain DSM 22066 / NBRC 105507 / MRE50).